A 220-amino-acid polypeptide reads, in one-letter code: Endonuclease NucS (220 aa).

This sequence belongs to the NucS endonuclease family.

The protein localises to the cytoplasm. In terms of biological role, cleaves both 3' and 5' ssDNA extremities of branched DNA structures. The sequence is that of Endonuclease NucS from Frankia alni (strain DSM 45986 / CECT 9034 / ACN14a).